The chain runs to 259 residues: Flap endonuclease Xni (259 aa).

Position 109 (D109) interacts with Mg(2+). Residues 165-255 (VKPQQLSDYW…FNLQDLRFTA (91 aa)) enclose the 5'-3' exonuclease domain. Residues L176, I187, and I190 each coordinate K(+). The tract at residues 189 to 194 (GIGPKA) is interaction with DNA.

It belongs to the Xni family. Requires Mg(2+) as cofactor. It depends on K(+) as a cofactor.

In terms of biological role, has flap endonuclease activity. During DNA replication, flap endonucleases cleave the 5'-overhanging flap structure that is generated by displacement synthesis when DNA polymerase encounters the 5'-end of a downstream Okazaki fragment. The protein is Flap endonuclease Xni of Vibrio vulnificus (strain YJ016).